The primary structure comprises 330 residues: uncharacterized protein (330 aa).

Residue His-257 is part of the active site.

The protein belongs to the IUNH family.

This is an uncharacterized protein from Schizosaccharomyces pombe (strain 972 / ATCC 24843) (Fission yeast).